The primary structure comprises 616 residues: Dihydroxy-acid dehydratase (616 aa).

A Mg(2+)-binding site is contributed by Asp81. Position 122 (Cys122) interacts with [2Fe-2S] cluster. Asp123 and Lys124 together coordinate Mg(2+). An N6-carboxylysine modification is found at Lys124. Cys195 is a binding site for [2Fe-2S] cluster. Mg(2+) is bound at residue Glu491. Ser517 (proton acceptor) is an active-site residue.

The protein belongs to the IlvD/Edd family. Homodimer. The cofactor is [2Fe-2S] cluster. Mg(2+) serves as cofactor.

The enzyme catalyses (2R)-2,3-dihydroxy-3-methylbutanoate = 3-methyl-2-oxobutanoate + H2O. It carries out the reaction (2R,3R)-2,3-dihydroxy-3-methylpentanoate = (S)-3-methyl-2-oxopentanoate + H2O. The protein operates within amino-acid biosynthesis; L-isoleucine biosynthesis; L-isoleucine from 2-oxobutanoate: step 3/4. It participates in amino-acid biosynthesis; L-valine biosynthesis; L-valine from pyruvate: step 3/4. Its function is as follows. Functions in the biosynthesis of branched-chain amino acids. Catalyzes the dehydration of (2R,3R)-2,3-dihydroxy-3-methylpentanoate (2,3-dihydroxy-3-methylvalerate) into 2-oxo-3-methylpentanoate (2-oxo-3-methylvalerate) and of (2R)-2,3-dihydroxy-3-methylbutanoate (2,3-dihydroxyisovalerate) into 2-oxo-3-methylbutanoate (2-oxoisovalerate), the penultimate precursor to L-isoleucine and L-valine, respectively. In Escherichia coli O17:K52:H18 (strain UMN026 / ExPEC), this protein is Dihydroxy-acid dehydratase.